A 1236-amino-acid chain; its full sequence is ATP-dependent helicase/nuclease subunit A (1236 aa).

Residues 4–473 (VKWTKEQQQA…VNLFKNFRSR (470 aa)) form the UvrD-like helicase ATP-binding domain. Residue 25 to 32 (AAAGSGKT) participates in ATP binding. A UvrD-like helicase C-terminal domain is found at 512–806 (YEDKSLVGGP…RIMSIHKSKG (295 aa)).

Belongs to the helicase family. AddA subfamily. As to quaternary structure, heterodimer of AddA and AddB/RexB. It depends on Mg(2+) as a cofactor.

The catalysed reaction is Couples ATP hydrolysis with the unwinding of duplex DNA by translocating in the 3'-5' direction.. The enzyme catalyses ATP + H2O = ADP + phosphate + H(+). Functionally, the heterodimer acts as both an ATP-dependent DNA helicase and an ATP-dependent, dual-direction single-stranded exonuclease. Recognizes the chi site generating a DNA molecule suitable for the initiation of homologous recombination. The AddA nuclease domain is required for chi fragment generation; this subunit has the helicase and 3' -&gt; 5' nuclease activities. The polypeptide is ATP-dependent helicase/nuclease subunit A (Clostridium novyi (strain NT)).